The sequence spans 86 residues: MKSHIAIICIIMLSFFSMHEYRCVGSTIGRSSKIYIPLCFHNNCIHPFKDDCWCCLAAGTKKDWCWLEKDFPDAKELCMKTCTRKI.

An N-terminal signal peptide occupies residues 1 to 21; sequence MKSHIAIICIIMLSFFSMHEY. Disulfide bonds link C39-C54, C44-C82, C52-C78, and C55-C65.

It belongs to the MEG family.

The polypeptide is EMBRYO SURROUNDING FACTOR 1-like protein 2 (ESFL2) (Arabidopsis thaliana (Mouse-ear cress)).